Consider the following 597-residue polypeptide: Proteasome-associated ATPase (597 aa).

Residues 1-12 show a composition bias toward basic and acidic residues; it reads MQHDRPGSRPEE. Residues 1 to 22 are disordered; it reads MQHDRPGSRPEEGGEQQIGGDA. Positions 21-97 form a coiled coil; sequence DAELNSQIRL…REEVDRLAQP (77 aa). 284 to 289 provides a ligand contact to ATP; it reads GCGKTL. The tract at residues 596-597 is docks into pockets in the proteasome alpha-ring; it reads YL.

Belongs to the AAA ATPase family. As to quaternary structure, homohexamer. Assembles into a hexameric ring structure that caps the 20S proteasome core. Strongly interacts with the prokaryotic ubiquitin-like protein Pup through a hydrophobic interface; the interacting region of ARC lies in its N-terminal coiled-coil domain. There is one Pup binding site per ARC hexamer ring. Upon ATP-binding, the C-terminus of ARC interacts with the alpha-rings of the proteasome core, possibly by binding to the intersubunit pockets.

It participates in protein degradation; proteasomal Pup-dependent pathway. Its function is as follows. ATPase which is responsible for recognizing, binding, unfolding and translocation of pupylated proteins into the bacterial 20S proteasome core particle. May be essential for opening the gate of the 20S proteasome via an interaction with its C-terminus, thereby allowing substrate entry and access to the site of proteolysis. Thus, the C-termini of the proteasomal ATPase may function like a 'key in a lock' to induce gate opening and therefore regulate proteolysis. The polypeptide is Proteasome-associated ATPase (Saccharopolyspora erythraea (strain ATCC 11635 / DSM 40517 / JCM 4748 / NBRC 13426 / NCIMB 8594 / NRRL 2338)).